The sequence spans 402 residues: Phosphoribulokinase, chloroplastic (402 aa).

The N-terminal 51 residues, 1–51, are a transit peptide targeting the chloroplast; the sequence is MAVCTVYTIPTTTHLGSSFNQNNKQVFFNYKRSSSSNNTLFTTRPSYVITC. Residues cysteine 67 and cysteine 106 are joined by a disulfide bond.

This sequence belongs to the phosphoribulokinase family.

Its subcellular location is the plastid. It localises to the chloroplast. The enzyme catalyses D-ribulose 5-phosphate + ATP = D-ribulose 1,5-bisphosphate + ADP + H(+). The protein operates within carbohydrate biosynthesis; Calvin cycle. Light regulated via thioredoxin by reversible oxidation/reduction of sulfhydryl/disulfide groups. The chain is Phosphoribulokinase, chloroplastic from Spinacia oleracea (Spinach).